The sequence spans 221 residues: Glutathione peroxidase 6 (221 aa).

The N-terminal stretch at 1–19 is a signal peptide; that stretch reads MTQQFWGPCLFSLFMAVLA. Cysteine 73 is a catalytic residue.

It belongs to the glutathione peroxidase family. Expressed in the Bowman glands.

The protein localises to the secreted. The catalysed reaction is 2 glutathione + H2O2 = glutathione disulfide + 2 H2O. The protein is Glutathione peroxidase 6 (Gpx6) of Rattus norvegicus (Rat).